A 698-amino-acid polypeptide reads, in one-letter code: Cytoplasmic polyadenylation element-binding protein 3 (698 aa).

Positions 1–11 (MQDDLLMDKSK) are enriched in basic and acidic residues. 2 disordered regions span residues 1–114 (MQDD…WSTG) and 158–208 (AQTQ…SAAA). The span at 13–28 (QPQPQQQQRQQQQPQP) shows a compositional bias: low complexity. Over residues 29 to 44 (ESSVSEAPSTPLSSET) the composition is skewed to polar residues. Over residues 87–96 (PQQPPPPQEP) the composition is skewed to pro residues. Residues 103-114 (LSPSFGSTWSTG) show a composition bias toward polar residues. Pro residues predominate over residues 165-185 (QPPPPAPAPQPAQPAQPPQAQ). Residues 186–208 (PPQQRRSPASPSQAPYAQRSAAA) show a composition bias toward low complexity. Phosphoserine occurs at positions 192, 195, and 290. Arg-308 bears the Asymmetric dimethylarginine mark. RRM domains follow at residues 441–532 (RKVF…PWNL) and 549–631 (KTIF…PYVL).

It belongs to the RRM CPEB family. Following synaptic activity, forms amyloid-like oligomers. Aggregation requires an intact actin cytoskeleton. Interacts with STAT5B; this inhibits STAT5B-mediated transcriptional activation. Interacts with E3 ubiquitin-protein ligase NEURL1; this leads to monoubiquitination and activation of CPEB3. Interacts with CAPN2; this leads to cleavage of CPEB3. Interacts (via C-terminal RNA-binding region) with TOB1; TOB1 also binds CNOT7/CAF1 and recruits it to CPEB3 to form a ternary complex. Interacts with SUMO-conjugating enzyme UBC9. Interacts with IPO5; the interaction is enhanced in a RAN-regulated manner following neuronal stimulation and mediates CPEB3 nuclear import. Interacts with exportin XPO1/CRM1. In terms of processing, activated by NEURL1-mediated monoubiquitination, resulting in the growth of new dendritic spines and increased levels of GRIA1 and GRIA2. NEURL1-mediated monoubiquitination facilitates synaptic plasticity and hippocampal-dependent memory storage. Post-translationally, under basal unstimulated conditions when CPEB3 is mainly unaggregated, sumoylated and acts as a translational repressor. Following neuronal stimulation, becomes desumoylated and aggregated which is required for the translation of mRNA targets and for dendritic filopodia formation. Following neuronal stimulation, cleaved by CAPN2 which abolishes its translational repressor activity, leading to translation of CPEB3 target mRNAs. In terms of processing, phosphorylation is enhanced by neuronal stimulation.

It localises to the cytoplasm. The protein resides in the nucleus. It is found in the synapse. The protein localises to the cell projection. Its subcellular location is the dendrite. It localises to the postsynaptic density. Functionally, sequence-specific RNA-binding protein which acts as a translational repressor in the basal unstimulated state but, following neuronal stimulation, acts as a translational activator. In contrast to CPEB1, does not bind to the cytoplasmic polyadenylation element (CPE), a uridine-rich sequence element within the mRNA 3'-UTR, but binds to a U-rich loop within a stem-loop structure. Required for the consolidation and maintenance of hippocampal-based long term memory. In the basal state, binds to the mRNA 3'-UTR of the glutamate receptors GRIA2/GLUR2 mRNA and negatively regulates their translation. Also represses the translation of DLG4, GRIN1, GRIN2A and GRIN2B. When activated, acts as a translational activator of GRIA1 and GRIA2. In the basal state, suppresses SUMO2 translation but activates it following neuronal stimulation. Binds to the 3'-UTR of TRPV1 mRNA and represses TRPV1 translation which is required to maintain normal thermoception. Binds actin mRNA, leading to actin translational repression in the basal state and to translational activation following neuronal stimulation. Negatively regulates target mRNA levels by binding to TOB1 which recruits CNOT7/CAF1 to a ternary complex and this leads to target mRNA deadenylation and decay. In addition to its role in translation, binds to and inhibits the transcriptional activation activity of STAT5B without affecting its dimerization or DNA-binding activity. This, in turn, represses transcription of the STAT5B target gene EGFR which has been shown to play a role in enhancing learning and memory performance. In contrast to CPEB1, CPEB2 and CPEB4, not required for cell cycle progression. The polypeptide is Cytoplasmic polyadenylation element-binding protein 3 (CPEB3) (Homo sapiens (Human)).